The sequence spans 188 residues: GTP-dependent dephospho-CoA kinase (188 aa).

GTP-binding residues include aspartate 43, valine 44, aspartate 62, glutamate 121, and aspartate 144.

Belongs to the GTP-dependent DPCK family.

The catalysed reaction is 3'-dephospho-CoA + GTP = GDP + CoA + H(+). Its pathway is cofactor biosynthesis; coenzyme A biosynthesis. Functionally, catalyzes the GTP-dependent phosphorylation of the 3'-hydroxyl group of dephosphocoenzyme A to form coenzyme A (CoA). This chain is GTP-dependent dephospho-CoA kinase, found in Methanococcoides burtonii (strain DSM 6242 / NBRC 107633 / OCM 468 / ACE-M).